The sequence spans 265 residues: Small ribosomal subunit protein uS5 (265 aa).

Residues 1–25 (MADTTTAAQADQKPTRAFGAGRPQR) are compositionally biased toward low complexity. The disordered stretch occupies residues 1 to 49 (MADTTTAAQADQKPTRAFGAGRPQRGAGGAPQRGGPRPQRGGQGETKSW). Ala-2 carries the post-translational modification N-acetylalanine. An S5 DRBM domain is found at 89–152 (LKDEVMKIVP…VAAKLSVIPV (64 aa)).

Belongs to the universal ribosomal protein uS5 family.

Component of the ribosome, a large ribonucleoprotein complex responsible for the synthesis of proteins in the cell. The small ribosomal subunit (SSU) binds messenger RNAs (mRNAs) and translates the encoded message by selecting cognate aminoacyl-transfer RNA (tRNA) molecules. The large subunit (LSU) contains the ribosomal catalytic site termed the peptidyl transferase center (PTC), which catalyzes the formation of peptide bonds, thereby polymerizing the amino acids delivered by tRNAs into a polypeptide chain. The nascent polypeptides leave the ribosome through a tunnel in the LSU and interact with protein factors that function in enzymatic processing, targeting, and the membrane insertion of nascent chains at the exit of the ribosomal tunnel. Plays a role in the assembly and function of the 40S ribosomal subunit. Mutations in this protein affects the control of translational fidelity. Involved in nucleolar processing of pre-18S ribosomal RNA and ribosome assembly. This chain is Small ribosomal subunit protein uS5 (rps2), found in Dictyostelium discoideum (Social amoeba).